The sequence spans 176 residues: Endothelin-2 (176 aa).

Residues 1-22 form the signal peptide; sequence MVSPAWCSIALALLLALHEGKG. Residues 23-44 constitute a propeptide that is removed on maturation; the sequence is QAAATMEQPASAPKGRGPHLRF. 2 cysteine pairs are disulfide-bonded: cysteine 47–cysteine 61 and cysteine 49–cysteine 57. Residues 68-176 constitute a propeptide that is removed on maturation; it reads VNTAGQTAPY…IPAHSRRRKR (109 aa). The interval 94 to 109 is endothelin-like; it reads CECSSAGDSACATFCH.

Belongs to the endothelin/sarafotoxin family.

Its subcellular location is the secreted. In terms of biological role, vasoconstrictor. The protein is Endothelin-2 (Edn2) of Rattus norvegicus (Rat).